The following is a 517-amino-acid chain: Cytochrome P450 monooxygenase ausI (517 aa).

A helical membrane pass occupies residues 8–28 (LAPLGQPWIAGLVVVSAVLYL). Cysteine 457 is a binding site for heme.

Belongs to the cytochrome P450 family. Heme is required as a cofactor.

It localises to the membrane. Its pathway is secondary metabolite biosynthesis; terpenoid biosynthesis. Cytochrome P450 monooxygenase; part of the gene cluster that mediates the biosynthesis of calidodehydroaustin, a fungal meroterpenoid. The first step of the pathway is the synthesis of 3,5-dimethylorsellinic acid by the polyketide synthase ausA. 3,5-dimethylorsellinic acid is then prenylated by the polyprenyl transferase ausN. Further epoxidation by the FAD-dependent monooxygenase ausM and cyclization by the probable terpene cyclase ausL lead to the formation of protoaustinoid A. Protoaustinoid A is then oxidized to spiro-lactone preaustinoid A3 by the combined action of the FAD-binding monooxygenases ausB and ausC, and the dioxygenase ausE. Acid-catalyzed keto-rearrangement and ring contraction of the tetraketide portion of preaustinoid A3 by ausJ lead to the formation of preaustinoid A4. The aldo-keto reductase ausK, with the help of ausH, is involved in the next step by transforming preaustinoid A4 into isoaustinone which is in turn hydroxylated by the P450 monooxygenase ausI to form austinolide. The cytochrome P450 monooxygenase ausG modifies austinolide to austinol. Austinol is further acetylated to austin by the O-acetyltransferase ausP, which spontaneously changes to dehydroaustin. The cytochrome P450 monooxygenase ausR then converts dehydroaustin is into 7-dehydrodehydroaustin. The hydroxylation catalyzed by ausR permits the O-acetyltransferase ausQ to add an additional acetyl group to the molecule, leading to the formation of acetoxydehydroaustin. The short chain dehydrogenase ausT catalyzes the reduction of the double bond present between carbon atoms 1 and 2 to convert 7-dehydrodehydroaustin into 1,2-dihydro-7-hydroxydehydroaustin. AusQ catalyzes not only an acetylation reaction but also the addition of the PKS ausV diketide product to 1,2-dihydro-7-hydroxydehydroaustin, forming precalidodehydroaustin. Finally, the iron/alpha-ketoglutarate-dependent dioxygenase converts precalidodehydroaustin into calidodehydroaustin. This is Cytochrome P450 monooxygenase ausI from Aspergillus calidoustus.